The primary structure comprises 951 residues: Cation channel sperm-associated auxiliary subunit epsilon (951 aa).

An N-terminal signal peptide occupies residues 1–19 (MSAREVAVLLLWLSCYGSA). The Extracellular segment spans residues 20 to 903 (LWRYSTNSPN…ETFGLIPSPS (884 aa)). Intrachain disulfides connect Cys57–Cys71, Cys101–Cys206, Cys246–Cys336, and Cys410–Cys413. N-linked (GlcNAc...) asparagine glycans are attached at residues Asn61 and Asn114. N-linked (GlcNAc...) asparagine glycosylation is found at Asn414, Asn472, Asn487, Asn493, and Asn535. Disulfide bonds link Cys583-Cys690, Cys703-Cys885, Cys719-Cys752, and Cys804-Cys835. Asn796 is a glycosylation site (N-linked (GlcNAc...) asparagine). 3 N-linked (GlcNAc...) asparagine glycosylation sites follow: Asn854, Asn881, and Asn886. A helical membrane pass occupies residues 904 to 924 (VYLVASFLFVLMLLFFTILVL). Over 925 to 951 (SYFRYMRIYRRYIYEPLHKPQRKRKKN) the chain is Cytoplasmic.

It belongs to the CATSPERD family. As to quaternary structure, component of the CatSper complex or CatSpermasome composed of the core pore-forming members CATSPER1, CATSPER2, CATSPER3 and CATSPER4 as well as auxiliary members CATSPERB, CATSPERG, CATSPERD, CATSPERE, CATSPERZ, C2CD6/CATSPERT, TMEM249, TMEM262 and EFCAB9. HSPA1 may be an additional auxiliary complex member. The core complex members CATSPER1, CATSPER2, CATSPER3 and CATSPER4 form a heterotetrameric channel. The auxiliary CATSPERB, CATSPERG, CATSPERD and CATSPERE subunits form a pavilion-like structure over the pore which stabilizes the complex through interactions with CATSPER4, CATSPER3, CATSPER1 and CATSPER2 respectively. TMEM262/CATSPERH interacts with CATSPERB, further stabilizing the complex. C2CD6/CATSPERT interacts at least with CATSPERD and is required for targeting the CatSper complex in the flagellar membrane.

The protein resides in the cell projection. It localises to the cilium. The protein localises to the flagellum membrane. Auxiliary component of the CatSper complex, a complex involved in sperm cell hyperactivation. Sperm cell hyperactivation is needed for sperm motility which is essential late in the preparation of sperm for fertilization. The chain is Cation channel sperm-associated auxiliary subunit epsilon from Homo sapiens (Human).